The primary structure comprises 186 residues: Sec-independent protein translocase protein TatB (186 aa).

The chain crosses the membrane as a helical span at residues 1-21; the sequence is MFDIGFSELILLMVLGLVVLG. The tract at residues 120 to 186 is disordered; the sequence is NAEKSQNAIS…SKSQSSKTKS (67 aa). Residues 177–186 are compositionally biased toward polar residues; that stretch reads SKSQSSKTKS.

Belongs to the TatB family. As to quaternary structure, the Tat system comprises two distinct complexes: a TatABC complex, containing multiple copies of TatA, TatB and TatC subunits, and a separate TatA complex, containing only TatA subunits. Substrates initially bind to the TatABC complex, which probably triggers association of the separate TatA complex to form the active translocon.

It localises to the cell inner membrane. Its function is as follows. Part of the twin-arginine translocation (Tat) system that transports large folded proteins containing a characteristic twin-arginine motif in their signal peptide across membranes. Together with TatC, TatB is part of a receptor directly interacting with Tat signal peptides. TatB may form an oligomeric binding site that transiently accommodates folded Tat precursor proteins before their translocation. This is Sec-independent protein translocase protein TatB from Haemophilus influenzae (strain ATCC 51907 / DSM 11121 / KW20 / Rd).